Reading from the N-terminus, the 249-residue chain is Phosphomannomutase 1 (249 aa).

The active-site Nucleophile is the Asp-12. Residues Asp-12 and Asp-14 each coordinate Mg(2+). The Proton donor/acceptor role is filled by Asp-14. 6 residues coordinate alpha-D-mannose 1-phosphate: Arg-21, Arg-123, Arg-134, Arg-141, Ser-179, and Asp-181. Positions 209, 223, and 227 each coordinate Mg(2+).

The protein belongs to the eukaryotic PMM family. Homodimer.

The protein localises to the cytoplasm. It carries out the reaction alpha-D-mannose 1-phosphate = D-mannose 6-phosphate. The protein operates within nucleotide-sugar biosynthesis; GDP-alpha-D-mannose biosynthesis; alpha-D-mannose 1-phosphate from D-fructose 6-phosphate: step 2/2. Its function is as follows. Involved in the synthesis of the GDP-mannose and dolichol-phosphate-mannose required for a number of critical mannosyl transfer reactions. This is Phosphomannomutase 1 (pmmA) from Dictyostelium discoideum (Social amoeba).